A 386-amino-acid polypeptide reads, in one-letter code: Diels-Alderase phm7 (386 aa).

The segment at 1–223 (MSEPTSSSSL…MVRGWSARPW (223 aa)) is beta-sandwich motif. Glu-51, Asn-84, and Lys-356 together coordinate substrate. The tract at residues 223–386 (WPTFMNDAYY…FGGQLQIPVP (164 aa)) is beta-barrel motif.

It belongs to the Diels-Alderase family.

Its pathway is secondary metabolite biosynthesis. Its activity is regulated as follows. 3-aminomethyl-p-menthane which is similar to the phomasetin substructure, dose-dependently inhibits phm7 activity in vitro and production of phomasetin in the fungus. Functionally, diels-Alderase; part of the gene cluster that mediates the biosynthesis of the trans-fused decalin-containing tetramic acid phomasetin, the stereochemical opposite of the HIV-1 integrase inhibitor equisetin. The PKS module of phm1 together with the enoylreductase phm4 catalyze the formation of the polyketide unit which is then conjugated to L-serine by the condensation domain of the phm1 NRPS module. Activity of the Dieckmann cyclase domain (RED) of phm1 results in release of the Dieckmann product intermediate. The Diels-Alderase phm7 then uses the Dieckmann product of phm1 as substrate and catalyzes the Diels-Alder cycloaddition to form the decalin ring of N-desmethylphomasetin. N-desmethylphomasetin is further methylated to phomasetin by the methyltransferase phm5. The protein is Diels-Alderase phm7 of Pyrenochaetopsis sp.